The following is a 387-amino-acid chain: Adaptive-response sensory kinase SasA (387 aa).

Residues 1–97 (MGESLSPQAL…TDQLANQLPQ (97 aa)) are interacts with KaiC. Residues 158–382 (LVAHDLRNPL…TFHFTMPVYR (225 aa)) form the Histidine kinase domain. Phosphohistidine; by autocatalysis is present on His161.

Homooligomerizes. Part of the circadian clock (KaiA, KaiB, KaiC, CikA, RpaA, SasA), the composition of which varies during the circadian cycle. Binds to the CI domain of KaiC; KaiB(fs) and SasA compete for the binding site. Binds preferentially to doubly phosphorylated KaiC. Interacts with LdpA. In terms of processing, autophosphorylates in vitro.

The enzyme catalyses ATP + protein L-histidine = ADP + protein N-phospho-L-histidine.. Functionally, member of the two-component regulatory system SasA/RpaA involved in genome-wide circadian gene expression. One of three clock output pathways. Participates in the KaiABC clock protein complex, which constitutes the main circadian regulator in cyanobacteria, via its interaction with KaiC. Required for robustness of the circadian rhythm of gene expression and involved in clock output. KaiC enhances the autophosphorylation activity of SasA, which then transfers its phosphate group to RpaA to activate it. Phosphotransfer is maximal when KaiC phosphorylation is active during the circadian cycle; this two-component system is activated by fully phosphorylated KaiC. A very robust clock is reconstituted with KaiA, KaiB, KaiC, SasA, CikA and RpaA; output is measured by transcription from an appropriate reporter. In addition to its output function, recruits fold-shifted KaiB (KaiB(fs)) to KaiC to cooperatively form the KaiB(6):KaiC(6) complex (independent of SasA kinase activity); at physiological concentrations increases their association. At higher concentrations SasA and KaiB(fs) compete to bind to KaiC. Mutations that decrease cooperativity nearly phenocopy a deletion mutation. Autophosphorylation and phosphotransfer activities are not essential for clock rhythms in continuous light, but they are essential for adaptation to light/dark cycles. This chain is Adaptive-response sensory kinase SasA, found in Synechococcus elongatus (strain ATCC 33912 / PCC 7942 / FACHB-805) (Anacystis nidulans R2).